Consider the following 352-residue polypeptide: Peptide chain release factor 1 (352 aa).

The residue at position 233 (Gln-233) is an N5-methylglutamine. The tract at residues 288-309 (NAKDRKEQVGSGDRSERIRTYN) is disordered. Residues 289 to 306 (AKDRKEQVGSGDRSERIR) show a composition bias toward basic and acidic residues.

Belongs to the prokaryotic/mitochondrial release factor family. In terms of processing, methylated by PrmC. Methylation increases the termination efficiency of RF1.

The protein localises to the cytoplasm. Its function is as follows. Peptide chain release factor 1 directs the termination of translation in response to the peptide chain termination codons UAG and UAA. This Helicobacter pylori (strain G27) protein is Peptide chain release factor 1.